The chain runs to 314 residues: Prohormone-3 (314 aa).

An N-terminal signal peptide occupies residues 1–19 (MGRVLLSASSLLLHIQVFT). The helical transmembrane segment at 90-112 (YTCVALTVVALVSTMHFGVEAWG) threads the bilayer.

The protein resides in the membrane. This chain is Prohormone-3, found in Apis mellifera (Honeybee).